The sequence spans 842 residues: Leucine--tRNA ligase (842 aa).

The short motif at 44-55 is the 'HIGH' region element; sequence PYPSANGLHVGH. Residues 619–623 carry the 'KMSKS' region motif; it reads KMSKS. Residue Lys622 coordinates ATP.

This sequence belongs to the class-I aminoacyl-tRNA synthetase family.

It localises to the cytoplasm. The catalysed reaction is tRNA(Leu) + L-leucine + ATP = L-leucyl-tRNA(Leu) + AMP + diphosphate. In Borrelia recurrentis (strain A1), this protein is Leucine--tRNA ligase.